The primary structure comprises 466 residues: Cysteine--tRNA ligase (466 aa).

Cys-28 contacts Zn(2+). The 'HIGH' region motif lies at 30-40 (PTVYNYIHIGN). Cys-208, His-233, and Glu-237 together coordinate Zn(2+). A 'KMSKS' region motif is present at residues 265 to 269 (KMSKS). ATP is bound at residue Lys-268.

Belongs to the class-I aminoacyl-tRNA synthetase family. Monomer. Zn(2+) is required as a cofactor.

The protein localises to the cytoplasm. The enzyme catalyses tRNA(Cys) + L-cysteine + ATP = L-cysteinyl-tRNA(Cys) + AMP + diphosphate. The polypeptide is Cysteine--tRNA ligase (Staphylococcus carnosus (strain TM300)).